Consider the following 193-residue polypeptide: Peptidyl-tRNA hydrolase (193 aa).

A tRNA-binding site is contributed by Y17. The active-site Proton acceptor is H22. Residues Y69, N71, and N117 each coordinate tRNA.

The protein belongs to the PTH family. In terms of assembly, monomer.

It localises to the cytoplasm. It catalyses the reaction an N-acyl-L-alpha-aminoacyl-tRNA + H2O = an N-acyl-L-amino acid + a tRNA + H(+). Hydrolyzes ribosome-free peptidyl-tRNAs (with 1 or more amino acids incorporated), which drop off the ribosome during protein synthesis, or as a result of ribosome stalling. Its function is as follows. Catalyzes the release of premature peptidyl moieties from peptidyl-tRNA molecules trapped in stalled 50S ribosomal subunits, and thus maintains levels of free tRNAs and 50S ribosomes. The protein is Peptidyl-tRNA hydrolase of Leifsonia xyli subsp. xyli (strain CTCB07).